The primary structure comprises 309 residues: Foldase protein PrsA (309 aa).

The first 22 residues, 1–22, serve as a signal peptide directing secretion; the sequence is MKTRSKLAAGFLTLMSVATLAA. The N-palmitoyl cysteine moiety is linked to residue C23. C23 carries S-diacylglycerol cysteine lipidation. The region spanning 146 to 241 is the PpiC domain; it reads TPETSVQVIK…TSYYIIKVTD (96 aa).

This sequence belongs to the PrsA family.

It localises to the cell membrane. The catalysed reaction is [protein]-peptidylproline (omega=180) = [protein]-peptidylproline (omega=0). In terms of biological role, plays a major role in protein secretion by helping the post-translocational extracellular folding of several secreted proteins. This chain is Foldase protein PrsA, found in Streptococcus agalactiae serotype III (strain NEM316).